Consider the following 120-residue polypeptide: Adult-specific rigid cuticular protein 11.9 (120 aa).

The Chitin-binding type R&amp;R domain occupies 9–87; it reads GGAYNFGYNT…ALAAMAPKAP (79 aa).

Functionally, component of the rigid cuticle of the spider. This chain is Adult-specific rigid cuticular protein 11.9, found in Araneus diadematus (European garden spider).